Reading from the N-terminus, the 213-residue chain is Proteasome subunit beta (213 aa).

Residues 1 to 11 constitute a propeptide, removed in mature form; by autocatalysis; that stretch reads MPEQYQESMTG. Catalysis depends on Thr-12, which acts as the Nucleophile.

The protein belongs to the peptidase T1B family. In terms of assembly, the 20S proteasome core is composed of 14 alpha and 14 beta subunits that assemble into four stacked heptameric rings, resulting in a barrel-shaped structure. The two inner rings, each composed of seven catalytic beta subunits, are sandwiched by two outer rings, each composed of seven alpha subunits. The catalytic chamber with the active sites is on the inside of the barrel. Has a gated structure, the ends of the cylinder being occluded by the N-termini of the alpha-subunits. Is capped at one or both ends by the proteasome regulatory ATPase, PAN.

The protein localises to the cytoplasm. The enzyme catalyses Cleavage of peptide bonds with very broad specificity.. With respect to regulation, the formation of the proteasomal ATPase PAN-20S proteasome complex, via the docking of the C-termini of PAN into the intersubunit pockets in the alpha-rings, triggers opening of the gate for substrate entry. Interconversion between the open-gate and close-gate conformations leads to a dynamic regulation of the 20S proteasome proteolysis activity. Its function is as follows. Component of the proteasome core, a large protease complex with broad specificity involved in protein degradation. The polypeptide is Proteasome subunit beta (Methanoregula boonei (strain DSM 21154 / JCM 14090 / 6A8)).